The primary structure comprises 428 residues: CinA-like protein (428 aa).

This sequence belongs to the CinA family.

This is CinA-like protein from Endomicrobium trichonymphae.